The chain runs to 503 residues: ATP synthase subunit alpha (503 aa).

170–177 provides a ligand contact to ATP; sequence GDKQTGKT.

The protein belongs to the ATPase alpha/beta chains family. F-type ATPases have 2 components, CF(1) - the catalytic core - and CF(0) - the membrane proton channel. CF(1) has five subunits: alpha(3), beta(3), gamma(1), delta(1), epsilon(1). CF(0) has three main subunits: a(1), b(2) and c(9-12). The alpha and beta chains form an alternating ring which encloses part of the gamma chain. CF(1) is attached to CF(0) by a central stalk formed by the gamma and epsilon chains, while a peripheral stalk is formed by the delta and b chains.

Its subcellular location is the cell inner membrane. The catalysed reaction is ATP + H2O + 4 H(+)(in) = ADP + phosphate + 5 H(+)(out). Functionally, produces ATP from ADP in the presence of a proton gradient across the membrane. The alpha chain is a regulatory subunit. This chain is ATP synthase subunit alpha, found in Helicobacter pylori (strain P12).